A 513-amino-acid chain; its full sequence is ATP synthase subunit alpha (513 aa).

Residue 169 to 176 coordinates ATP; that stretch reads GDRQTGKT.

This sequence belongs to the ATPase alpha/beta chains family. In terms of assembly, F-type ATPases have 2 components, CF(1) - the catalytic core - and CF(0) - the membrane proton channel. CF(1) has five subunits: alpha(3), beta(3), gamma(1), delta(1), epsilon(1). CF(0) has three main subunits: a(1), b(2) and c(9-12). The alpha and beta chains form an alternating ring which encloses part of the gamma chain. CF(1) is attached to CF(0) by a central stalk formed by the gamma and epsilon chains, while a peripheral stalk is formed by the delta and b chains.

The protein localises to the cell inner membrane. The enzyme catalyses ATP + H2O + 4 H(+)(in) = ADP + phosphate + 5 H(+)(out). In terms of biological role, produces ATP from ADP in the presence of a proton gradient across the membrane. The alpha chain is a regulatory subunit. The polypeptide is ATP synthase subunit alpha (Enterobacter sp. (strain 638)).